Here is a 389-residue protein sequence, read N- to C-terminus: Na(+)/H(+) antiporter NhaA 1 (389 aa).

11 helical membrane-spanning segments follow: residues 12–32 (VLNEAFGGVLLIVCTLLALLV), 62–82 (FLLWINDGLISIFFFAIGLEL), 97–117 (IVLPFMAALGGILIPAMLFAL), 128–148 (GWAIPTATDTAFALAILMMCG), 157–177 (IFLLSLAIFDDVGAILIIAIF), 184–204 (IVAFVVAGLAILAMLILNLLG), 220–240 (ISVLKSGVHATLAGIVTAFFI), 260–280 (FWIAFIILPLFAFANAGVNLS), 282–302 (IDIGAIFSGVSIGIFLGLFVG), 331–351 (LYGVCILTGIGFTMSLFIDGL), and 365–385 (LAILIASFCSGIWGFIYLKFF).

The protein belongs to the NhaA Na(+)/H(+) (TC 2.A.33) antiporter family.

It localises to the cell inner membrane. It carries out the reaction Na(+)(in) + 2 H(+)(out) = Na(+)(out) + 2 H(+)(in). Na(+)/H(+) antiporter that extrudes sodium in exchange for external protons. The polypeptide is Na(+)/H(+) antiporter NhaA 1 (Campylobacter jejuni (strain RM1221)).